We begin with the raw amino-acid sequence, 147 residues long: Myoglobin (147 aa).

A Globin domain is found at 2 to 141 (ADFDMVLKCW…IITDMEADYK (140 aa)). Nitrite is bound at residue His-60. His-60 is a binding site for O2. His-89 serves as a coordination point for heme b.

Belongs to the globin family. In terms of assembly, monomeric.

The protein resides in the cytoplasm. The protein localises to the sarcoplasm. It catalyses the reaction Fe(III)-heme b-[protein] + nitric oxide + H2O = Fe(II)-heme b-[protein] + nitrite + 2 H(+). The catalysed reaction is H2O2 + AH2 = A + 2 H2O. Its function is as follows. Monomeric heme protein which primary function is to store oxygen and facilitate its diffusion within muscle tissues. Reversibly binds oxygen through a pentacoordinated heme iron and enables its timely and efficient release as needed during periods of heightened demand. Depending on the oxidative conditions of tissues and cells, and in addition to its ability to bind oxygen, it also has a nitrite reductase activity whereby it regulates the production of bioactive nitric oxide. Under stress conditions, like hypoxia and anoxia, it also protects cells against reactive oxygen species thanks to its pseudoperoxidase activity. The polypeptide is Myoglobin (mb) (Channichthys rhinoceratus (Unicorn icefish)).